The following is a 107-amino-acid chain: U1-lycotoxin-Ls1f (107 aa).

A signal peptide spans 1 to 20 (MMKVLVVVALLVTLISYSSS). A propeptide spanning residues 21–41 (EGIDDLEADELLSLMANEQTR) is cleaved from the precursor. 4 disulfide bridges follow: Cys-44-Cys-59, Cys-51-Cys-68, Cys-58-Cys-86, and Cys-70-Cys-84.

Belongs to the neurotoxin 19 (CSTX) family. 04 (U1-Lctx) subfamily. As to expression, expressed by the venom gland.

It is found in the secreted. The sequence is that of U1-lycotoxin-Ls1f from Lycosa singoriensis (Wolf spider).